The primary structure comprises 598 residues: DNA mismatch repair protein MutL (598 aa).

The protein belongs to the DNA mismatch repair MutL/HexB family.

Functionally, this protein is involved in the repair of mismatches in DNA. It is required for dam-dependent methyl-directed DNA mismatch repair. May act as a 'molecular matchmaker', a protein that promotes the formation of a stable complex between two or more DNA-binding proteins in an ATP-dependent manner without itself being part of a final effector complex. This is DNA mismatch repair protein MutL from Thiobacillus denitrificans (strain ATCC 25259 / T1).